The chain runs to 151 residues: Large ribosomal subunit protein eL8 (151 aa).

Belongs to the eukaryotic ribosomal protein eL8 family. As to quaternary structure, part of the 50S ribosomal subunit. Probably part of the RNase P complex.

The protein localises to the cytoplasm. Functionally, multifunctional RNA-binding protein that recognizes the K-turn motif in ribosomal RNA, the RNA component of RNase P, box H/ACA, box C/D and box C'/D' sRNAs. This Pyrobaculum neutrophilum (strain DSM 2338 / JCM 9278 / NBRC 100436 / V24Sta) (Thermoproteus neutrophilus) protein is Large ribosomal subunit protein eL8.